The primary structure comprises 194 residues: Protein GrpE (194 aa).

Belongs to the GrpE family. In terms of assembly, homodimer.

Its subcellular location is the cytoplasm. Participates actively in the response to hyperosmotic and heat shock by preventing the aggregation of stress-denatured proteins, in association with DnaK and GrpE. It is the nucleotide exchange factor for DnaK and may function as a thermosensor. Unfolded proteins bind initially to DnaJ; upon interaction with the DnaJ-bound protein, DnaK hydrolyzes its bound ATP, resulting in the formation of a stable complex. GrpE releases ADP from DnaK; ATP binding to DnaK triggers the release of the substrate protein, thus completing the reaction cycle. Several rounds of ATP-dependent interactions between DnaJ, DnaK and GrpE are required for fully efficient folding. The protein is Protein GrpE of Aliivibrio salmonicida (strain LFI1238) (Vibrio salmonicida (strain LFI1238)).